A 61-amino-acid chain; its full sequence is Large ribosomal subunit protein uL30 (61 aa).

The protein belongs to the universal ribosomal protein uL30 family. As to quaternary structure, part of the 50S ribosomal subunit.

This Mycolicibacterium gilvum (strain PYR-GCK) (Mycobacterium gilvum (strain PYR-GCK)) protein is Large ribosomal subunit protein uL30.